A 133-amino-acid polypeptide reads, in one-letter code: Small ribosomal subunit protein uS8 (133 aa).

The protein belongs to the universal ribosomal protein uS8 family. As to quaternary structure, part of the 30S ribosomal subunit.

Its function is as follows. One of the primary rRNA binding proteins, it binds directly to 16S rRNA central domain where it helps coordinate assembly of the platform of the 30S subunit. The chain is Small ribosomal subunit protein uS8 from Sulfolobus acidocaldarius (strain ATCC 33909 / DSM 639 / JCM 8929 / NBRC 15157 / NCIMB 11770).